A 216-amino-acid polypeptide reads, in one-letter code: Peptide methionine sulfoxide reductase MsrA (216 aa).

Cys-58 is an active-site residue.

The protein belongs to the MsrA Met sulfoxide reductase family.

The catalysed reaction is L-methionyl-[protein] + [thioredoxin]-disulfide + H2O = L-methionyl-(S)-S-oxide-[protein] + [thioredoxin]-dithiol. It carries out the reaction [thioredoxin]-disulfide + L-methionine + H2O = L-methionine (S)-S-oxide + [thioredoxin]-dithiol. Has an important function as a repair enzyme for proteins that have been inactivated by oxidation. Catalyzes the reversible oxidation-reduction of methionine sulfoxide in proteins to methionine. This Azotobacter vinelandii (strain DJ / ATCC BAA-1303) protein is Peptide methionine sulfoxide reductase MsrA.